A 196-amino-acid chain; its full sequence is Holliday junction branch migration complex subunit RuvA (196 aa).

The interval 1 to 63 is domain I; the sequence is MIASVRGEVL…EDSMTLYGFP (63 aa). The segment at 64–138 is domain II; it reads DGETRDLFLT…DKVGVAATGG (75 aa). A flexible linker region spans residues 138-142; that stretch reads GALST. The segment at 143 to 196 is domain III; the sequence is NGHAVRSPVVEALVGLGFAAKQAEEATDTVLAANHDATTSSALRSALSLLGKAR.

The protein belongs to the RuvA family. Homotetramer. Forms an RuvA(8)-RuvB(12)-Holliday junction (HJ) complex. HJ DNA is sandwiched between 2 RuvA tetramers; dsDNA enters through RuvA and exits via RuvB. An RuvB hexamer assembles on each DNA strand where it exits the tetramer. Each RuvB hexamer is contacted by two RuvA subunits (via domain III) on 2 adjacent RuvB subunits; this complex drives branch migration. In the full resolvosome a probable DNA-RuvA(4)-RuvB(12)-RuvC(2) complex forms which resolves the HJ.

The protein localises to the cytoplasm. The RuvA-RuvB-RuvC complex processes Holliday junction (HJ) DNA during genetic recombination and DNA repair, while the RuvA-RuvB complex plays an important role in the rescue of blocked DNA replication forks via replication fork reversal (RFR). RuvA specifically binds to HJ cruciform DNA, conferring on it an open structure. The RuvB hexamer acts as an ATP-dependent pump, pulling dsDNA into and through the RuvAB complex. HJ branch migration allows RuvC to scan DNA until it finds its consensus sequence, where it cleaves and resolves the cruciform DNA. The chain is Holliday junction branch migration complex subunit RuvA from Mycobacterium bovis (strain ATCC BAA-935 / AF2122/97).